We begin with the raw amino-acid sequence, 77 residues long: Acyl carrier protein (77 aa).

The Carrier domain occupies 2 to 77 (SDVAEKVKKI…DAIAYIEEKK (76 aa)). Position 37 is an O-(pantetheine 4'-phosphoryl)serine (S37).

Belongs to the acyl carrier protein (ACP) family. Post-translationally, 4'-phosphopantetheine is transferred from CoA to a specific serine of apo-ACP by AcpS. This modification is essential for activity because fatty acids are bound in thioester linkage to the sulfhydryl of the prosthetic group.

It is found in the cytoplasm. It participates in lipid metabolism; fatty acid biosynthesis. Carrier of the growing fatty acid chain in fatty acid biosynthesis. This chain is Acyl carrier protein, found in Desulfovibrio desulfuricans (strain ATCC 27774 / DSM 6949 / MB).